The sequence spans 147 residues: Basic phospholipase A2 beta-bungarotoxin A1 chain (147 aa).

A signal peptide spans 1 to 19 (MNPAHLLVLSAVCVSLLGA). The propeptide occupies 20 to 27 (ANIPPHPL). 6 cysteine pairs are disulfide-bonded: cysteine 54-cysteine 146, cysteine 56-cysteine 72, cysteine 71-cysteine 127, cysteine 78-cysteine 120, cysteine 88-cysteine 113, and cysteine 106-cysteine 118. Positions 55, 57, and 59 each coordinate Ca(2+). The active site involves histidine 75. Ca(2+) is bound at residue aspartate 76. Aspartate 121 is an active-site residue.

This sequence belongs to the phospholipase A2 family. Group I subfamily. D49 sub-subfamily. Heterodimer; disulfide-linked. The A chains have phospholipase A2 activity and the B chains show homology with the basic protease inhibitors. The A1 chain is found in beta-1 and beta-2 bungarotoxins. It depends on Ca(2+) as a cofactor. Expressed by the venom gland.

The protein localises to the secreted. It catalyses the reaction a 1,2-diacyl-sn-glycero-3-phosphocholine + H2O = a 1-acyl-sn-glycero-3-phosphocholine + a fatty acid + H(+). Snake venom phospholipase A2 (PLA2) that inhibits neuromuscular transmission by blocking acetylcholine release from the nerve termini. PLA2 catalyzes the calcium-dependent hydrolysis of the 2-acyl groups in 3-sn-phosphoglycerides. This is Basic phospholipase A2 beta-bungarotoxin A1 chain from Bungarus multicinctus (Many-banded krait).